The chain runs to 406 residues: Calsequestrin-2 (406 aa).

The first 19 residues, 1–19, serve as a signal peptide directing secretion; sequence MKATCWILAGFCLLFCCKA. The N-linked (GlcNAc...) asparagine glycan is linked to N335. The disordered stretch occupies residues 365-406; that stretch reads VLSGKINTEDDDDDDDDDDDDDDDDDDDDDDDDDDDDDDDDD. A compositionally biased stretch (acidic residues) spans 373-406; that stretch reads EDDDDDDDDDDDDDDDDDDDDDDDDDDDDDDDDD.

The protein belongs to the calsequestrin family. As to expression, skeletal and heart muscle.

The protein localises to the sarcoplasmic reticulum lumen. Its function is as follows. Calsequestrin is a high-capacity, moderate affinity, calcium-binding protein and thus acts as an internal calcium store in muscle. Calcium ions are bound by clusters of acidic residues at the protein surface, especially at the interface between subunits. Can bind around 60 Ca(2+) ions. Regulates the release of lumenal Ca(2+) via the calcium release channel RYR2; this plays an important role in triggering muscle contraction. Plays a role in excitation-contraction coupling in the heart and in regulating the rate of heart beats. In Gallus gallus (Chicken), this protein is Calsequestrin-2 (CASQ2).